The primary structure comprises 285 residues: Ribose-phosphate pyrophosphokinase (285 aa).

Residues Asp-33 to Glu-35 and Arg-91 to Gln-92 contribute to the ATP site. The Mg(2+) site is built by His-125 and Asp-162. Residue Lys-185 is part of the active site. D-ribose 5-phosphate contacts are provided by residues Arg-187, Asp-211, and Ser-215–Thr-219.

The protein belongs to the ribose-phosphate pyrophosphokinase family. Class III (archaeal) subfamily. Mg(2+) serves as cofactor.

The protein resides in the cytoplasm. The enzyme catalyses D-ribose 5-phosphate + ATP = 5-phospho-alpha-D-ribose 1-diphosphate + AMP + H(+). Its pathway is metabolic intermediate biosynthesis; 5-phospho-alpha-D-ribose 1-diphosphate biosynthesis; 5-phospho-alpha-D-ribose 1-diphosphate from D-ribose 5-phosphate (route I): step 1/1. Its function is as follows. Involved in the biosynthesis of the central metabolite phospho-alpha-D-ribosyl-1-pyrophosphate (PRPP) via the transfer of pyrophosphoryl group from ATP to 1-hydroxyl of ribose-5-phosphate (Rib-5-P). In Methanothermobacter thermautotrophicus (strain ATCC 29096 / DSM 1053 / JCM 10044 / NBRC 100330 / Delta H) (Methanobacterium thermoautotrophicum), this protein is Ribose-phosphate pyrophosphokinase.